A 404-amino-acid polypeptide reads, in one-letter code: Phosphopentomutase (404 aa).

Residues Asp10, Asp303, His308, Asp344, His345, and His356 each coordinate Mn(2+).

It belongs to the phosphopentomutase family. The cofactor is Mn(2+).

The protein localises to the cytoplasm. The enzyme catalyses 2-deoxy-alpha-D-ribose 1-phosphate = 2-deoxy-D-ribose 5-phosphate. It carries out the reaction alpha-D-ribose 1-phosphate = D-ribose 5-phosphate. The protein operates within carbohydrate degradation; 2-deoxy-D-ribose 1-phosphate degradation; D-glyceraldehyde 3-phosphate and acetaldehyde from 2-deoxy-alpha-D-ribose 1-phosphate: step 1/2. Its function is as follows. Isomerase that catalyzes the conversion of deoxy-ribose 1-phosphate (dRib-1-P) and ribose 1-phosphate (Rib-1-P) to deoxy-ribose 5-phosphate (dRib-5-P) and ribose 5-phosphate (Rib-5-P), respectively. This is Phosphopentomutase from Shewanella baltica (strain OS185).